The chain runs to 326 residues: Probable oxidoreductase patJ (326 aa).

Positions 287–326 are disordered; that stretch reads HGVQPGSVNGSNGHSTGVESKLEQLGSRAQRRVVIDDAGK. The span at 292–304 shows a compositional bias: polar residues; the sequence is GSVNGSNGHSTGV.

Belongs to the oxidoreductase OpS7 family.

It localises to the vacuole lumen. Its subcellular location is the cytoplasmic vesicle lumen. Its pathway is mycotoxin biosynthesis; patulin biosynthesis. Probable oxidoreductase; part of the gene cluster that mediates the biosynthesis of patulin, an acetate-derived tetraketide mycotoxin produced by several fungal species that shows antimicrobial properties against several bacteria. PatJ acts with patO in the vacuole to convert gentisyl alcohol to isoepoxydon. The pathway begins with the synthesis of 6-methylsalicylic acid by the polyketide synthase (PKS) patK via condensation of acetate and malonate units. The 6-methylsalicylic acid decarboxylase patG then catalyzes the decarboxylation of 6-methylsalicylic acid to yield m-cresol (also known as 3-methylphenol). These first reactions occur in the cytosol. The intermediate m-cresol is then transported into the endoplasmic reticulum where the cytochrome P450 monooxygenase patH converts it to m-hydroxybenzyl alcohol, which is further converted to gentisyl alcohol by the cytochrome P450 monooxygenase patI. The oxidoreductases patJ and patO further convert gentisyl alcohol to isoepoxydon in the vacuole. PatN catalyzes then the transformation of isoepoxydon into phyllostine. The cluster protein patF is responsible for the conversion from phyllostine to neopatulin whereas the alcohol dehydrogenase patD converts neopatulin to E-ascladiol. The steps between isoepoxydon and E-ascladiol occur in the cytosol, and E-ascladiol is probably secreted to the extracellular space by one of the cluster-specific transporters patC or patM. Finally, the secreted patulin synthase patE catalyzes the conversion of E-ascladiol to patulin. The sequence is that of Probable oxidoreductase patJ from Penicillium expansum (Blue mold rot fungus).